Here is a 508-residue protein sequence, read N- to C-terminus: Flagellin (508 aa).

It belongs to the bacterial flagellin family.

The protein resides in the secreted. Its subcellular location is the bacterial flagellum. In terms of biological role, flagellin is the subunit protein which polymerizes to form the filaments of bacterial flagella. This chain is Flagellin (fliC), found in Salmonella oranienberg.